The chain runs to 503 residues: Cytosol aminopeptidase (503 aa).

Residues lysine 269 and aspartate 274 each contribute to the Mn(2+) site. The active site involves lysine 281. Positions 292, 351, and 353 each coordinate Mn(2+). Arginine 355 is an active-site residue.

This sequence belongs to the peptidase M17 family. Mn(2+) serves as cofactor.

The protein resides in the cytoplasm. The catalysed reaction is Release of an N-terminal amino acid, Xaa-|-Yaa-, in which Xaa is preferably Leu, but may be other amino acids including Pro although not Arg or Lys, and Yaa may be Pro. Amino acid amides and methyl esters are also readily hydrolyzed, but rates on arylamides are exceedingly low.. The enzyme catalyses Release of an N-terminal amino acid, preferentially leucine, but not glutamic or aspartic acids.. Its function is as follows. Presumably involved in the processing and regular turnover of intracellular proteins. Catalyzes the removal of unsubstituted N-terminal amino acids from various peptides. The protein is Cytosol aminopeptidase of Vibrio cholerae serotype O1 (strain ATCC 39541 / Classical Ogawa 395 / O395).